Consider the following 216-residue polypeptide: Probable transaldolase (216 aa).

The active-site Schiff-base intermediate with substrate is Lys83.

It belongs to the transaldolase family. Type 3B subfamily.

It localises to the cytoplasm. The enzyme catalyses D-sedoheptulose 7-phosphate + D-glyceraldehyde 3-phosphate = D-erythrose 4-phosphate + beta-D-fructose 6-phosphate. It participates in carbohydrate degradation; pentose phosphate pathway; D-glyceraldehyde 3-phosphate and beta-D-fructose 6-phosphate from D-ribose 5-phosphate and D-xylulose 5-phosphate (non-oxidative stage): step 2/3. Transaldolase is important for the balance of metabolites in the pentose-phosphate pathway. The chain is Probable transaldolase from Methanococcus aeolicus (strain ATCC BAA-1280 / DSM 17508 / OCM 812 / Nankai-3).